A 277-amino-acid polypeptide reads, in one-letter code: Undecaprenyl-diphosphatase (277 aa).

Transmembrane regions (helical) follow at residues 88 to 108 (MGWL…LFQD), 117 to 137 (MWIV…ADAV), 157 to 179 (FAQA…AGLL), 191 to 211 (SFLL…YKVV), 227 to 247 (LATV…LKFV), and 255 to 275 (FVWY…FGVI).

The protein belongs to the UppP family.

Its subcellular location is the cell membrane. It catalyses the reaction di-trans,octa-cis-undecaprenyl diphosphate + H2O = di-trans,octa-cis-undecaprenyl phosphate + phosphate + H(+). Its function is as follows. Catalyzes the dephosphorylation of undecaprenyl diphosphate (UPP). Confers resistance to bacitracin. The sequence is that of Undecaprenyl-diphosphatase from Pseudarthrobacter chlorophenolicus (strain ATCC 700700 / DSM 12829 / CIP 107037 / JCM 12360 / KCTC 9906 / NCIMB 13794 / A6) (Arthrobacter chlorophenolicus).